Reading from the N-terminus, the 258-residue chain is Dihydroorotate dehydrogenase B (NAD(+)), electron transfer subunit (258 aa).

Residues 1–101 (MKKAYLTVVS…LGPLGNGYDP (101 aa)) form the FAD-binding FR-type domain. FAD is bound by residues 52–55 (RPIS), 69–71 (IYR), and 76–77 (GT). [2Fe-2S] cluster contacts are provided by cysteine 220, cysteine 225, cysteine 228, and cysteine 243.

This sequence belongs to the PyrK family. Heterotetramer of 2 PyrK and 2 PyrD type B subunits. Requires [2Fe-2S] cluster as cofactor. The cofactor is FAD.

It functions in the pathway pyrimidine metabolism; UMP biosynthesis via de novo pathway; orotate from (S)-dihydroorotate (NAD(+) route): step 1/1. Responsible for channeling the electrons from the oxidation of dihydroorotate from the FMN redox center in the PyrD type B subunit to the ultimate electron acceptor NAD(+). This Bacillus pumilus (strain SAFR-032) protein is Dihydroorotate dehydrogenase B (NAD(+)), electron transfer subunit.